Reading from the N-terminus, the 144-residue chain is Deoxyuridine 5'-triphosphate nucleotidohydrolase (144 aa).

Residues 63 to 65 (RSG), N76, and 80 to 82 (TID) contribute to the substrate site.

The protein belongs to the dUTPase family. It depends on Mg(2+) as a cofactor.

It catalyses the reaction dUTP + H2O = dUMP + diphosphate + H(+). The protein operates within pyrimidine metabolism; dUMP biosynthesis; dUMP from dCTP (dUTP route): step 2/2. In terms of biological role, this enzyme is involved in nucleotide metabolism: it produces dUMP, the immediate precursor of thymidine nucleotides and it decreases the intracellular concentration of dUTP so that uracil cannot be incorporated into DNA. This is Deoxyuridine 5'-triphosphate nucleotidohydrolase from Alkaliphilus metalliredigens (strain QYMF).